A 157-amino-acid chain; its full sequence is Small ribosomal subunit protein uS7 (157 aa).

Belongs to the universal ribosomal protein uS7 family. In terms of assembly, part of the 30S ribosomal subunit. Contacts proteins S9 and S11.

Its function is as follows. One of the primary rRNA binding proteins, it binds directly to 16S rRNA where it nucleates assembly of the head domain of the 30S subunit. Is located at the subunit interface close to the decoding center, probably blocks exit of the E-site tRNA. This is Small ribosomal subunit protein uS7 from Polaromonas naphthalenivorans (strain CJ2).